The chain runs to 85 residues: MAGEWACLLVSLVLLWGAAGSRDGFLLDRNFCRIKCSFLGSNSMCADRCTVLGASAGHCNNYACFCTDLRDRVKIWGDSVRCRKP.

The signal sequence occupies residues 1 to 20; that stretch reads MAGEWACLLVSLVLLWGAAG. Residues 22-83 enclose the LCN-type CS-alpha/beta domain; it reads RDGFLLDRNF…KIWGDSVRCR (62 aa). Intrachain disulfides connect Cys32-Cys82, Cys36-Cys59, Cys45-Cys64, and Cys49-Cys66.

The protein belongs to the long (4 C-C) scorpion toxin superfamily. Sodium channel inhibitor family. Expressed by the venom gland.

Its subcellular location is the secreted. In terms of biological role, putative sodium channel toxin. This is Putative sodium channel toxin Ts37 from Tityus serrulatus (Brazilian scorpion).